Reading from the N-terminus, the 507-residue chain is Sulfatase (507 aa).

A signal peptide spans 1 to 18 (MKTRYFLLLGICMLSCRT). Ca(2+) contacts are provided by Asp39, Asp40, and Cys79. Cys79 (nucleophile) is an active-site residue. Cys79 carries the post-translational modification 3-oxoalanine (Cys). His139 is a catalytic residue. Asp325 and His326 together coordinate Ca(2+).

Belongs to the sulfatase family. The cofactor is Ca(2+). The conversion to 3-oxoalanine (also known as C-formylglycine, FGly), of a serine or cysteine residue in prokaryotes and of a cysteine residue in eukaryotes, is critical for catalytic activity. This post-translational modification is severely defective in multiple sulfatase deficiency (MSD).

The protein localises to the periplasm. Its function is as follows. Sulfatase that may be involved in ulvan degradation. Ulvan is the main polysaccharide component of the Ulvales (green seaweed) cell wall. It is composed of disaccharide building blocks comprising 3-sulfated rhamnose (Rha3S) linked to D-glucuronic acid (GlcA), L-iduronic acid (IduA), or D-xylose (Xyl). Has no activity on different ulvan polymers. This chain is Sulfatase, found in Formosa agariphila (strain DSM 15362 / KCTC 12365 / LMG 23005 / KMM 3901 / M-2Alg 35-1).